The sequence spans 317 residues: Putative 2-hydroxyacid dehydrogenase SAOUHSC_02577 (317 aa).

NAD(+)-binding positions include Glu155 to Ile156, Ala234 to Arg236, and Asp260. The active site involves Arg236. The active site involves Glu265. His283 serves as the catalytic Proton donor. Position 283–286 (His283–Asn286) interacts with NAD(+).

Belongs to the D-isomer specific 2-hydroxyacid dehydrogenase family.

In Staphylococcus aureus (strain NCTC 8325 / PS 47), this protein is Putative 2-hydroxyacid dehydrogenase SAOUHSC_02577.